Consider the following 207-residue polypeptide: Fibroblast growth factor 18 (207 aa).

The N-terminal stretch at 1–27 is a signal peptide; sequence MYSAPSACTCLCLHFLLLCFQVQVLAA. Residue N39 is glycosylated (N-linked (GlcNAc...) asparagine). C109 and C127 are oxidised to a cystine. N137 carries an N-linked (GlcNAc...) asparagine glycan. Residues 157–183 are disordered; sequence GRPRKGPKTRENQQDVHFMKRYPKGQT. A compositionally biased stretch (basic and acidic residues) spans 164-174; it reads KTRENQQDVHF.

Belongs to the heparin-binding growth factors family. Interacts with FGFR3 and FGFR4. As to expression, mainly expressed in the lung. Not detected in brain, heart, liver, kidney and small intestine.

Its subcellular location is the secreted. Its function is as follows. Plays an important role in the regulation of cell proliferation, cell differentiation and cell migration. Required for normal ossification and bone development. Stimulates hepatic and intestinal proliferation. The sequence is that of Fibroblast growth factor 18 (Fgf18) from Rattus norvegicus (Rat).